A 575-amino-acid polypeptide reads, in one-letter code: Septation ring formation regulator EzrA (575 aa).

Topologically, residues 1 to 8 (MSNGQLIY) are extracellular. A helical transmembrane segment spans residues 9 to 27 (LMVAIAVILVLAYVVAIFL). Topologically, residues 28–575 (RKRNEGRLEA…YEKTRETIRF (548 aa)) are cytoplasmic. 4 coiled-coil regions span residues 105 to 191 (LKAS…FVTL), 265 to 301 (LYEA…LYDI), 354 to 416 (VRRI…IEKD), and 456 to 526 (TASN…IQEA).

The protein belongs to the EzrA family.

The protein resides in the cell membrane. Negative regulator of FtsZ ring formation; modulates the frequency and position of FtsZ ring formation. Inhibits FtsZ ring formation at polar sites. Interacts either with FtsZ or with one of its binding partners to promote depolymerization. The protein is Septation ring formation regulator EzrA of Streptococcus pneumoniae (strain ATCC BAA-255 / R6).